Consider the following 61-residue polypeptide: Large ribosomal subunit protein uL30 (61 aa).

Belongs to the universal ribosomal protein uL30 family. In terms of assembly, part of the 50S ribosomal subunit.

The chain is Large ribosomal subunit protein uL30 from Corynebacterium aurimucosum (strain ATCC 700975 / DSM 44827 / CIP 107346 / CN-1) (Corynebacterium nigricans).